The sequence spans 516 residues: Cytochrome P450 1A2 (516 aa).

Ser69 carries O-linked (GlcNAc) serine glycosylation. A substrate-binding site is contributed by Phe226. Cys458 lines the heme pocket.

Belongs to the cytochrome P450 family. In terms of assembly, interacts with PGRMC1; the interaction requires PGRMC1 homodimerization. The cofactor is heme.

It is found in the endoplasmic reticulum membrane. The protein resides in the microsome membrane. It carries out the reaction an organic molecule + reduced [NADPH--hemoprotein reductase] + O2 = an alcohol + oxidized [NADPH--hemoprotein reductase] + H2O + H(+). The catalysed reaction is 17beta-estradiol + reduced [NADPH--hemoprotein reductase] + O2 = 2-hydroxy-17beta-estradiol + oxidized [NADPH--hemoprotein reductase] + H2O + H(+). The enzyme catalyses 17beta-estradiol + reduced [NADPH--hemoprotein reductase] + O2 = 4-hydroxy-17beta-estradiol + oxidized [NADPH--hemoprotein reductase] + H2O + H(+). It catalyses the reaction estrone + reduced [NADPH--hemoprotein reductase] + O2 = 2-hydroxyestrone + oxidized [NADPH--hemoprotein reductase] + H2O + H(+). It carries out the reaction estrone + reduced [NADPH--hemoprotein reductase] + O2 = 4-hydroxyestrone + oxidized [NADPH--hemoprotein reductase] + H2O + H(+). The catalysed reaction is cholesterol + reduced [NADPH--hemoprotein reductase] + O2 = 25-hydroxycholesterol + oxidized [NADPH--hemoprotein reductase] + H2O + H(+). The enzyme catalyses all-trans-retinol + reduced [NADPH--hemoprotein reductase] + O2 = all-trans-retinal + oxidized [NADPH--hemoprotein reductase] + 2 H2O + H(+). It catalyses the reaction all-trans-retinal + reduced [NADPH--hemoprotein reductase] + O2 = all-trans-retinoate + oxidized [NADPH--hemoprotein reductase] + H2O + 2 H(+). It carries out the reaction (5Z,8Z,11Z,14Z)-eicosatetraenoate + reduced [NADPH--hemoprotein reductase] + O2 = (14R,15S)-epoxy-(5Z,8Z,11Z)-eicosatrienoate + oxidized [NADPH--hemoprotein reductase] + H2O + H(+). The catalysed reaction is (5Z,8Z,11Z,14Z)-eicosatetraenoate + reduced [NADPH--hemoprotein reductase] + O2 = (14S,15R)-epoxy-(5Z,8Z,11Z)-eicosatrienoate + oxidized [NADPH--hemoprotein reductase] + H2O + H(+). The enzyme catalyses (5Z,8Z,11Z,14Z,17Z)-eicosapentaenoate + reduced [NADPH--hemoprotein reductase] + O2 = (17R,18S)-epoxy-(5Z,8Z,11Z,14Z)-eicosatetraenoate + oxidized [NADPH--hemoprotein reductase] + H2O + H(+). It catalyses the reaction (4Z,7Z,10Z,13Z,16Z,19Z)-docosahexaenoate + reduced [NADPH--hemoprotein reductase] + O2 = (19R,20S)-epoxy-(4Z,7Z,10Z,13Z,16Z)-docosapentaenoate + oxidized [NADPH--hemoprotein reductase] + H2O + H(+). It carries out the reaction (5S)-hydroperoxy-(6E,8Z,11Z,14Z)-eicosatetraenoate = 5-oxo-(6E,8Z,11Z,14Z)-eicosatetraenoate + H2O. The catalysed reaction is (12S)-hydroperoxy-(5Z,8Z,10E,14Z)-eicosatetraenoate = 12-oxo-(5Z,8Z,10E,14Z)-eicosatetraenoate + H2O. The enzyme catalyses (15S)-hydroperoxy-(5Z,8Z,11Z,13E)-eicosatetraenoate = 15-oxo-(5Z,8Z,11Z,13E)-eicosatetraenoate + H2O. It catalyses the reaction (13S)-hydroperoxy-(9Z,11E)-octadecadienoate = 13-oxo-(9Z,11E)-octadecadienoate + H2O. It carries out the reaction (5Z,8Z,11Z,14Z)-eicosatetraenoate + reduced [NADPH--hemoprotein reductase] + O2 = 13-hydroxy-(5Z,8Z,11Z,14Z)-eicosatetraenoate + oxidized [NADPH--hemoprotein reductase] + H2O + H(+). The catalysed reaction is (5Z,8Z,11Z,14Z)-eicosatetraenoate + reduced [NADPH--hemoprotein reductase] + O2 = 19-hydroxy-(5Z,8Z,11Z,14Z)-eicosatetraenoate + oxidized [NADPH--hemoprotein reductase] + H2O + H(+). The enzyme catalyses (9Z,12Z)-octadecadienoate + reduced [NADPH--hemoprotein reductase] + O2 = 11-hydroxy-(9Z,12Z)-octadecadienoate + oxidized [NADPH--hemoprotein reductase] + H2O + H(+). It participates in cofactor metabolism; retinol metabolism. Its pathway is steroid metabolism; cholesterol metabolism. It functions in the pathway lipid metabolism; arachidonate metabolism. A cytochrome P450 monooxygenase involved in the metabolism of various endogenous substrates, including fatty acids, steroid hormones and vitamins. Mechanistically, uses molecular oxygen inserting one oxygen atom into a substrate, and reducing the second into a water molecule, with two electrons provided by NADPH via cytochrome P450 reductase (NADPH--hemoprotein reductase). Catalyzes the hydroxylation of carbon-hydrogen bonds. Exhibits high catalytic activity for the formation of hydroxyestrogens from estrone (E1) and 17beta-estradiol (E2), namely 2-hydroxy E1 and E2. Metabolizes cholesterol toward 25-hydroxycholesterol, a physiological regulator of cellular cholesterol homeostasis. May act as a major enzyme for all-trans retinoic acid biosynthesis in the liver. Catalyzes two successive oxidative transformation of all-trans retinol to all-trans retinal and then to the active form all-trans retinoic acid. Primarily catalyzes stereoselective epoxidation of the last double bond of polyunsaturated fatty acids (PUFA), displaying a strong preference for the (R,S) stereoisomer. Catalyzes bisallylic hydroxylation and omega-1 hydroxylation of PUFA. May also participate in eicosanoids metabolism by converting hydroperoxide species into oxo metabolites (lipoxygenase-like reaction, NADPH-independent). Plays a role in the oxidative metabolism of xenobiotics. Catalyzes the N-hydroxylation of heterocyclic amines and the O-deethylation of phenacetin. Metabolizes caffeine via N3-demethylation. The sequence is that of Cytochrome P450 1A2 (CYP1A2) from Balaenoptera acutorostrata (Common minke whale).